A 414-amino-acid chain; its full sequence is Argininosuccinate synthase (414 aa).

12-20 lines the ATP pocket; the sequence is AYSGGLDTS. Positions 90 and 95 each coordinate L-citrulline. G120 is a binding site for ATP. Positions 122, 126, and 127 each coordinate L-aspartate. N126 provides a ligand contact to L-citrulline. L-citrulline contacts are provided by R130, S179, S188, E264, and Y276.

This sequence belongs to the argininosuccinate synthase family. Type 1 subfamily. As to quaternary structure, homotetramer.

Its subcellular location is the cytoplasm. It carries out the reaction L-citrulline + L-aspartate + ATP = 2-(N(omega)-L-arginino)succinate + AMP + diphosphate + H(+). It functions in the pathway amino-acid biosynthesis; L-arginine biosynthesis; L-arginine from L-ornithine and carbamoyl phosphate: step 2/3. This chain is Argininosuccinate synthase, found in Alkaliphilus metalliredigens (strain QYMF).